The primary structure comprises 412 residues: Gamma-glutamyl phosphate reductase (412 aa).

This sequence belongs to the gamma-glutamyl phosphate reductase family.

The protein resides in the cytoplasm. The enzyme catalyses L-glutamate 5-semialdehyde + phosphate + NADP(+) = L-glutamyl 5-phosphate + NADPH + H(+). The protein operates within amino-acid biosynthesis; L-proline biosynthesis; L-glutamate 5-semialdehyde from L-glutamate: step 2/2. Catalyzes the NADPH-dependent reduction of L-glutamate 5-phosphate into L-glutamate 5-semialdehyde and phosphate. The product spontaneously undergoes cyclization to form 1-pyrroline-5-carboxylate. The sequence is that of Gamma-glutamyl phosphate reductase from Actinobacillus pleuropneumoniae serotype 5b (strain L20).